The primary structure comprises 104 residues: Cuticle protein 67, isoform B (104 aa).

A run of 7 repeats spans residues 7–10 (AAPA), 14–17 (AAPA), 21–24 (AAPA), 28–31 (AAPA), 85–88 (AAPA), 92–95 (AAPA), and 98–101 (AAPA).

Component of the cuticle of migratory locust which contains more than 100 different structural proteins. The sequence is that of Cuticle protein 67, isoform B from Locusta migratoria (Migratory locust).